Reading from the N-terminus, the 258-residue chain is Short-chain dehydrogenase chyC (258 aa).

R37, D55, N81, Y154, K158, V185, and T187 together coordinate NADP(+). The active-site Proton donor is Y154. K158 serves as the catalytic Lowers pKa of active site Tyr.

The protein belongs to the short-chain dehydrogenases/reductases (SDR) family.

Its function is as follows. Short-chain dehydrogenase; part of the gene cluster that mediates the biosynthesis of the yellow pigment chrysogine. the NRPS chyA mediates the condensation of anthranilic acid and alanine into the intermediate 2-(2-aminopropanamido)benzoic acid. The remainder of the pathway is highly branched yielding at least 13 chrysogine-related compounds. The malonyl transferase chyE converts 2-(2-aminopropanamido)benzoic acid and 2-(2-aminopropanamido)benzamidine into 2-(2-(2-carboxyacetamido)propanamido)benzoic acid and 3-((1-((2-carbamoylphenyl)amino)-1-oxopropan-2-yl)amino)-3-oxopropanoic acid, respectively. ChyD is an amidase, being responsible for the amidation of the carboxylic acid moiety of 2-(2-aminopropanamido)benzoic acid, 2-(2-(2-carboxyacetamido)propanamido)benzoic acid and 2-(2-((4-amino-1-carboxy-4-oxobutyl)amino)propanamido)benzoic acid. ChyC is involved in the same reactions as ChyD, but plays a more minor role in the amidation reactions compared to chyD. The oxidoreductases chyH and chyM are involved in oxidation reactions that form N-pyruvoylanthranilamide from 2-(2-aminopropanamido)benzamidine and (1-((2-carbamoylphenyl)amino)-1-oxopropan-2-yl)glutamine, respectively. N-pyruvoylanthranilamide is further converted via two further branches in the pathway, yielding chrysogine and additional chrysogine-related coumpounds. Chrysogine is likely formed by a spontaneous ring closure from N-pyruvoylanthranilamide. This Penicillium rubens (strain ATCC 28089 / DSM 1075 / NRRL 1951 / Wisconsin 54-1255) (Penicillium chrysogenum) protein is Short-chain dehydrogenase chyC.